A 330-amino-acid chain; its full sequence is Holliday junction branch migration complex subunit RuvB (330 aa).

The large ATPase domain (RuvB-L) stretch occupies residues 1-181 (MEDRLVGCRL…FGVINKLELY (181 aa)). ATP-binding positions include leucine 20, arginine 21, glycine 62, lysine 65, threonine 66, threonine 67, 128 to 130 (EDY), arginine 171, tyrosine 181, and arginine 218. Threonine 66 provides a ligand contact to Mg(2+). Residues 182-252 (SVEELGQIVK…IARTGLEALE (71 aa)) form a small ATPAse domain (RuvB-S) region. Positions 255 to 330 (EIGLDAVDRN…AYEHFGLKYE (76 aa)) are head domain (RuvB-H). Lysine 310 and arginine 315 together coordinate DNA.

This sequence belongs to the RuvB family. In terms of assembly, homohexamer. Forms an RuvA(8)-RuvB(12)-Holliday junction (HJ) complex. HJ DNA is sandwiched between 2 RuvA tetramers; dsDNA enters through RuvA and exits via RuvB. An RuvB hexamer assembles on each DNA strand where it exits the tetramer. Each RuvB hexamer is contacted by two RuvA subunits (via domain III) on 2 adjacent RuvB subunits; this complex drives branch migration. In the full resolvosome a probable DNA-RuvA(4)-RuvB(12)-RuvC(2) complex forms which resolves the HJ.

It is found in the cytoplasm. The catalysed reaction is ATP + H2O = ADP + phosphate + H(+). In terms of biological role, the RuvA-RuvB-RuvC complex processes Holliday junction (HJ) DNA during genetic recombination and DNA repair, while the RuvA-RuvB complex plays an important role in the rescue of blocked DNA replication forks via replication fork reversal (RFR). RuvA specifically binds to HJ cruciform DNA, conferring on it an open structure. The RuvB hexamer acts as an ATP-dependent pump, pulling dsDNA into and through the RuvAB complex. RuvB forms 2 homohexamers on either side of HJ DNA bound by 1 or 2 RuvA tetramers; 4 subunits per hexamer contact DNA at a time. Coordinated motions by a converter formed by DNA-disengaged RuvB subunits stimulates ATP hydrolysis and nucleotide exchange. Immobilization of the converter enables RuvB to convert the ATP-contained energy into a lever motion, pulling 2 nucleotides of DNA out of the RuvA tetramer per ATP hydrolyzed, thus driving DNA branch migration. The RuvB motors rotate together with the DNA substrate, which together with the progressing nucleotide cycle form the mechanistic basis for DNA recombination by continuous HJ branch migration. Branch migration allows RuvC to scan DNA until it finds its consensus sequence, where it cleaves and resolves cruciform DNA. The polypeptide is Holliday junction branch migration complex subunit RuvB (Acetivibrio thermocellus (strain ATCC 27405 / DSM 1237 / JCM 9322 / NBRC 103400 / NCIMB 10682 / NRRL B-4536 / VPI 7372) (Clostridium thermocellum)).